Reading from the N-terminus, the 744-residue chain is Translation initiation factor IF-2, chloroplastic (744 aa).

The segment at 113–146 (NSEGSFKSGKQKKKEKGKHKQNVNKDIHHTKNNR) is disordered. The span at 121 to 134 (GKQKKKEKGKHKQN) shows a compositional bias: basic residues. The region spanning 244–417 (NRAPIVTILG…CSLAEFINLK (174 aa)) is the tr-type G domain. The segment at 253–260 (GHVDHGKT) is G1. A GTP-binding site is contributed by 253–260 (GHVDHGKT). The tract at residues 278 to 282 (GITQS) is G2. The segment at 303–306 (DTPG) is G3. GTP-binding positions include 303-307 (DTPGH) and 357-360 (NKID). The segment at 357-360 (NKID) is G4. Residues 393-395 (SAL) form a G5 region.

Belongs to the TRAFAC class translation factor GTPase superfamily. Classic translation factor GTPase family. IF-2 subfamily.

The protein resides in the plastid. It localises to the chloroplast. One of the essential components for the initiation of protein synthesis. Protects formylmethionyl-tRNA from spontaneous hydrolysis and promotes its binding to the 30S ribosomal subunits. Also involved in the hydrolysis of GTP during the formation of the 70S ribosomal complex. This is Translation initiation factor IF-2, chloroplastic (infB) from Gracilaria tenuistipitata var. liui (Red alga).